Here is a 30-residue protein sequence, read N- to C-terminus: MNKQRFLFAAKISGIHFLLSLTVAALLAGL.

This is Fimbrial assembly protein, serogroup B1 (fimB) from Dichelobacter nodosus (Bacteroides nodosus).